A 599-amino-acid chain; its full sequence is MFS-type transporter ucsM (599 aa).

A compositionally biased stretch (basic and acidic residues) spans A23–R34. The tract at residues A23 to G42 is disordered. A run of 8 helical transmembrane segments spans residues V147–L167, I178–P198, G204–F224, I263–Y283, W291–L311, I386–S406, F424–L444, and I454–V474. An N-linked (GlcNAc...) asparagine glycan is attached at N517. 2 helical membrane passes run L539 to V559 and L563 to V583.

The protein belongs to the major facilitator superfamily. Proton-dependent oligopeptide transporter (POT/PTR) (TC 2.A.17) family.

The protein resides in the membrane. In terms of biological role, MFS-type transporter; part of the gene cluster that mediates the biosynthesis of UCS1025A, a member of the pyrrolizidinone family that acts as a strong telomerase inhibitor and displays potent antibacterial and antitumor properties. These compounds share a hemiaminal-containing pyrrolizidinone core fused with a gamma-lactone, giving a furopyrrolizidine that is connected to a decalin fragment. In Acremonium sp, this protein is MFS-type transporter ucsM.